Here is a 98-residue protein sequence, read N- to C-terminus: Small ribosomal subunit protein bS6 (98 aa).

This sequence belongs to the bacterial ribosomal protein bS6 family.

Binds together with bS18 to 16S ribosomal RNA. This is Small ribosomal subunit protein bS6 from Levilactobacillus brevis (strain ATCC 367 / BCRC 12310 / CIP 105137 / JCM 1170 / LMG 11437 / NCIMB 947 / NCTC 947) (Lactobacillus brevis).